The primary structure comprises 362 residues: MQPHTQPPQPEASSSRAVHIPSDPAPPRPCLTNDAIVSRWQSSPGFQYFWAWIKRRCDRLKGKEIIRGPFDHSAHGIRSLMNMLDQMTSWVEDATPQPQSNQRFGNLAFRTYNKLLQERLPPLIDSWDIPSNLRSQLLPLFINSHAFGHPTRLDYGTGHELAFVLGLWCCVVPGWVGGDNGTEEEEDELILRVFTRYLELTTFLQKTYNLEPAGSHGVWGLDDYCFLPYLFGSAQLLGSNLTPSASLSLALSHHPSATSPPSAPITDLYTLSLHHLTLFKFGASFSEHSPLLYSLSQMPNWVKPHGGLKKMFLGEVVGKRVVVQGIWVGGWCWGEDVPNVEERGDKNEGKGTDAGTKAPWAR.

The segment covering 1 to 10 (MQPHTQPPQP) has biased composition (pro residues). Disordered stretches follow at residues 1–28 (MQPHTQPPQPEASSSRAVHIPSDPAPPR) and 339–362 (NVEERGDKNEGKGTDAGTKAPWAR). The segment covering 340 to 351 (VEERGDKNEGKG) has biased composition (basic and acidic residues).

It belongs to the PTPA-type PPIase family.

It localises to the cytoplasm. The protein localises to the nucleus. The enzyme catalyses [protein]-peptidylproline (omega=180) = [protein]-peptidylproline (omega=0). In terms of biological role, PPIases accelerate the folding of proteins. It catalyzes the cis-trans isomerization of proline imidic peptide bonds in oligopeptides. Acts as a regulatory subunit for PP2A-like phosphatases modulating their activity or substrate specificity, probably by inducing a conformational change in the catalytic subunit, a direct target of the PPIase. Can reactivate inactive phosphatase PP2A-phosphatase methylesterase complexes (PP2Ai) in presence of ATP and Mg(2+) by dissociating the inactive form from the complex. The protein is Serine/threonine-protein phosphatase 2A activator 1 (RRD1) of Cryptococcus neoformans var. neoformans serotype D (strain B-3501A) (Filobasidiella neoformans).